The sequence spans 226 residues: MSKKGKKYIEAFSKVDKNKFYNIEDAILLLKEIKFAKFDETIDISINLNLKKNHTVRDTIVLPNQFMKPKRILVFAKGDRADEARAFGATYVGDDDLINKIKSGWDEFDVVVATPDMMKDVGRLGPILGKRGLMPNPKTQTVTNNLKDAINSLKKGRTEFRANKNGVISFSFGKSSMDNEKIKENYEEFVKEVVKKRPSDLKGAFIDSIYISSTMGPSIKVNFVWR.

Belongs to the universal ribosomal protein uL1 family. As to quaternary structure, part of the 50S ribosomal subunit.

Functionally, binds directly to 23S rRNA. The L1 stalk is quite mobile in the ribosome, and is involved in E site tRNA release. Its function is as follows. Protein L1 is also a translational repressor protein, it controls the translation of the L11 operon by binding to its mRNA. This is Large ribosomal subunit protein uL1 from Borreliella burgdorferi (strain ATCC 35210 / DSM 4680 / CIP 102532 / B31) (Borrelia burgdorferi).